The primary structure comprises 432 residues: 5'-deoxyadenosine deaminase (432 aa).

Zn(2+) is bound by residues His-63 and His-65. Substrate contacts are provided by Glu-92 and His-184. Zn(2+) is bound at residue His-211. Substrate-binding residues include Glu-214 and Asp-299. Residue Asp-299 coordinates Zn(2+).

This sequence belongs to the metallo-dependent hydrolases superfamily. MTA/SAH deaminase family. As to quaternary structure, homotetramer. Zn(2+) is required as a cofactor.

It catalyses the reaction 5'-deoxyadenosine + H2O + H(+) = 5'-deoxyinosine + NH4(+). The catalysed reaction is S-adenosyl-L-homocysteine + H2O + H(+) = S-inosyl-L-homocysteine + NH4(+). It carries out the reaction S-methyl-5'-thioadenosine + H2O + H(+) = S-methyl-5'-thioinosine + NH4(+). The enzyme catalyses adenosine + H2O + H(+) = inosine + NH4(+). It functions in the pathway amino-acid biosynthesis; S-adenosyl-L-methionine biosynthesis. In terms of biological role, catalyzes the deamination of three SAM-derived enzymatic products, namely 5'-deoxyadenosine, S-adenosyl-L-homocysteine, and 5'-methylthioadenosine, to produce the inosine analogs. Can also deaminate adenosine. The preferred substrate for this enzyme is 5'-deoxyadenosine, but all these substrates are efficiently deaminated. Likely functions in a S-adenosyl-L-methionine (SAM) recycling pathway from S-adenosyl-L-homocysteine (SAH) produced from SAM-dependent methylation reactions. May also be involved in the recycling of 5'-deoxyadenosine, whereupon the 5'-deoxyribose moiety of 5'-deoxyinosine is further metabolized to deoxyhexoses used for the biosynthesis of aromatic amino acids in methanogens. The protein is 5'-deoxyadenosine deaminase of Methanosarcina acetivorans (strain ATCC 35395 / DSM 2834 / JCM 12185 / C2A).